A 166-amino-acid polypeptide reads, in one-letter code: Kelch repeat protein B10 (166 aa).

Kelch repeat units follow at residues 25 to 76 (TIFV…STFG) and 77 to 129 (MLYF…KLNN).

It belongs to the poxviruses Kelch family.

This Oryctolagus cuniculus (Rabbit) protein is Kelch repeat protein B10.